Here is a 155-residue protein sequence, read N- to C-terminus: Ribonuclease H (155 aa).

Positions 1–142 (MLKQVEIFTD…CDELARNAAG (142 aa)) constitute an RNase H type-1 domain. 4 residues coordinate Mg(2+): Asp-10, Glu-48, Asp-70, and Asp-134.

Belongs to the RNase H family. In terms of assembly, monomer. Mg(2+) serves as cofactor.

The protein localises to the cytoplasm. It carries out the reaction Endonucleolytic cleavage to 5'-phosphomonoester.. Functionally, endonuclease that specifically degrades the RNA of RNA-DNA hybrids. The chain is Ribonuclease H from Erwinia tasmaniensis (strain DSM 17950 / CFBP 7177 / CIP 109463 / NCPPB 4357 / Et1/99).